A 1033-amino-acid polypeptide reads, in one-letter code: DNA polymerase I A, chloroplastic (1033 aa).

Residues 1–11 are compositionally biased toward pro residues; that stretch reads MAVAPPLPPAP. Disordered stretches follow at residues 1 to 32 and 104 to 142; these read MAVA…LSSP and TNGT…PSNS. The transit peptide at 1–55 directs the protein to the chloroplast; that stretch reads MAVAPPLPPAPARQLRRWKGSSPRPPPWLSSPFRRTRYLSRPAFAAGGRQDYSPS. Basic and acidic residues predominate over residues 115–124; it reads LRHDPSEDIR. Over residues 125–142 the composition is skewed to polar residues; the sequence is SSNYPSLYNQRERGPSNS. Positions 321–482 constitute a 3'-5' exonuclease domain; sequence FGNGKTCIWV…LYESLKNKLE (162 aa). The polymerase stretch occupies residues 696-1030; the sequence is CHAIAALCEV…VDAKYAKSWY (335 aa).

The protein belongs to the DNA polymerase type-A family. As to expression, expressed in shoot apical meristem, root apical meristem, leaf primordia and the marginal meristem.

It localises to the plastid. Its subcellular location is the chloroplast. The enzyme catalyses DNA(n) + a 2'-deoxyribonucleoside 5'-triphosphate = DNA(n+1) + diphosphate. With respect to regulation, inhibited by dideoxythymidine-triphosphate (ddTTP), but not by aphidicolin and N-ethylmaleimide. Its function is as follows. In addition to polymerase activity, this DNA polymerase exhibits 5'-3' exonuclease activity. May be required for DNA replication and accumulation in plastids. In Oryza sativa subsp. japonica (Rice), this protein is DNA polymerase I A, chloroplastic.